We begin with the raw amino-acid sequence, 458 residues long: ATP synthase subunit beta (458 aa).

Position 148–155 (148–155) interacts with ATP; sequence GGAGVGKT.

The protein belongs to the ATPase alpha/beta chains family. As to quaternary structure, F-type ATPases have 2 components, CF(1) - the catalytic core - and CF(0) - the membrane proton channel. CF(1) has five subunits: alpha(3), beta(3), gamma(1), delta(1), epsilon(1). CF(0) has three main subunits: a(1), b(2) and c(9-12). The alpha and beta chains form an alternating ring which encloses part of the gamma chain. CF(1) is attached to CF(0) by a central stalk formed by the gamma and epsilon chains, while a peripheral stalk is formed by the delta and b chains.

It is found in the cell inner membrane. The enzyme catalyses ATP + H2O + 4 H(+)(in) = ADP + phosphate + 5 H(+)(out). Its function is as follows. Produces ATP from ADP in the presence of a proton gradient across the membrane. The catalytic sites are hosted primarily by the beta subunits. This is ATP synthase subunit beta from Shewanella halifaxensis (strain HAW-EB4).